The sequence spans 197 residues: Adenylyl-sulfate kinase (197 aa).

Residue 33–40 participates in ATP binding; the sequence is GLSGSGKS. Residue Ser107 is the Phosphoserine intermediate of the active site.

It belongs to the APS kinase family.

The enzyme catalyses adenosine 5'-phosphosulfate + ATP = 3'-phosphoadenylyl sulfate + ADP + H(+). It participates in sulfur metabolism; hydrogen sulfide biosynthesis; sulfite from sulfate: step 2/3. Catalyzes the synthesis of activated sulfate. The protein is Adenylyl-sulfate kinase of Bacillus pumilus (strain SAFR-032).